Reading from the N-terminus, the 22-residue chain is Chymotrypsin inhibitor (22 aa).

Residues 1–22 form a disordered region; that stretch reads FDESFGFQGPSTYEKTPLGEPA.

As to expression, hemolymph.

Its subcellular location is the secreted. It is found in the extracellular space. Its function is as follows. Inhibits chymotrypsin stoichiometrically. Also inhibits porcine pancreatic elastase and trypsin. This is Chymotrypsin inhibitor from Mythimna unipuncta (Armyworm moth).